An 890-amino-acid chain; its full sequence is Translation initiation factor IF-2 (890 aa).

Disordered stretches follow at residues 31-164 and 189-266; these read KLAQ…PAEP and FKAP…ESLK. Residues 42–54 show a composition bias toward basic and acidic residues; sequence SSSEKPSAKEKSV. The span at 55-72 shows a compositional bias: low complexity; that stretch reads KVALAATSTPTASAEQAS. Acidic residues predominate over residues 114–128; that stretch reads PEPELEVVDEVCDES. Basic and acidic residues-rich tracts occupy residues 149–163 and 242–266; these read PQEKELEPKPVKPAE and PKRDAGKKNLTDFRDRSKKSDESLK. A tr-type G domain is found at 395-564; the sequence is IRSPIVAFMG…ALQAEVLELK (170 aa). Residues 404 to 411 form a G1 region; that stretch reads GHVDHGKT. 404–411 is a GTP binding site; the sequence is GHVDHGKT. Residues 429–433 form a G2 region; sequence AITQH. Residues 450 to 453 are G3; the sequence is DTPG. Residues 450-454 and 504-507 contribute to the GTP site; these read DTPGH and NKCD. The interval 504–507 is G4; it reads NKCD. The G5 stretch occupies residues 540-542; the sequence is SAK.

The protein belongs to the TRAFAC class translation factor GTPase superfamily. Classic translation factor GTPase family. IF-2 subfamily.

The protein localises to the cytoplasm. Its function is as follows. One of the essential components for the initiation of protein synthesis. Protects formylmethionyl-tRNA from spontaneous hydrolysis and promotes its binding to the 30S ribosomal subunits. Also involved in the hydrolysis of GTP during the formation of the 70S ribosomal complex. This is Translation initiation factor IF-2 (infB) from Chlamydia pneumoniae (Chlamydophila pneumoniae).